The primary structure comprises 301 residues: UDP-3-O-acyl-N-acetylglucosamine deacetylase (301 aa).

Zn(2+)-binding residues include histidine 81, histidine 237, and aspartate 241. The active-site Proton donor is histidine 264.

It belongs to the LpxC family. The cofactor is Zn(2+).

It carries out the reaction a UDP-3-O-[(3R)-3-hydroxyacyl]-N-acetyl-alpha-D-glucosamine + H2O = a UDP-3-O-[(3R)-3-hydroxyacyl]-alpha-D-glucosamine + acetate. It participates in glycolipid biosynthesis; lipid IV(A) biosynthesis; lipid IV(A) from (3R)-3-hydroxytetradecanoyl-[acyl-carrier-protein] and UDP-N-acetyl-alpha-D-glucosamine: step 2/6. In terms of biological role, catalyzes the hydrolysis of UDP-3-O-myristoyl-N-acetylglucosamine to form UDP-3-O-myristoylglucosamine and acetate, the committed step in lipid A biosynthesis. In Leptospira borgpetersenii serovar Hardjo-bovis (strain JB197), this protein is UDP-3-O-acyl-N-acetylglucosamine deacetylase.